A 646-amino-acid chain; its full sequence is Chaperone protein DnaK (646 aa).

At Thr-198 the chain carries Phosphothreonine; by autocatalysis. Positions 603–646 (EQAQQAGGAEGFDPNAFQGGDAGQQKADDGVVDAEFTEVKDDKK) are disordered. The segment covering 618-627 (AFQGGDAGQQ) has biased composition (low complexity).

This sequence belongs to the heat shock protein 70 family.

Acts as a chaperone. The sequence is that of Chaperone protein DnaK from Acinetobacter baumannii (strain AB307-0294).